A 239-amino-acid chain; its full sequence is Purine nucleoside phosphorylase DeoD-type (239 aa).

H5 contacts a purine D-ribonucleoside. Residues G21, R25, R44, and 88–91 (RVGS) contribute to the phosphate site. A purine D-ribonucleoside is bound by residues 180–182 (EME) and 204–205 (SD). D205 serves as the catalytic Proton donor.

This sequence belongs to the PNP/UDP phosphorylase family. Homohexamer; trimer of homodimers.

It carries out the reaction a purine D-ribonucleoside + phosphate = a purine nucleobase + alpha-D-ribose 1-phosphate. The enzyme catalyses a purine 2'-deoxy-D-ribonucleoside + phosphate = a purine nucleobase + 2-deoxy-alpha-D-ribose 1-phosphate. Its function is as follows. Catalyzes the reversible phosphorolytic breakdown of the N-glycosidic bond in the beta-(deoxy)ribonucleoside molecules, with the formation of the corresponding free purine bases and pentose-1-phosphate. This chain is Purine nucleoside phosphorylase DeoD-type, found in Citrobacter koseri (strain ATCC BAA-895 / CDC 4225-83 / SGSC4696).